The chain runs to 436 residues: Glutamyl-tRNA reductase (436 aa).

Substrate is bound by residues 49–52, Ser109, 114–116, and Gln120; these read TCNR and EGQ. Catalysis depends on Cys50, which acts as the Nucleophile. 198-203 is an NADP(+) binding site; it reads GAGRMS.

The protein belongs to the glutamyl-tRNA reductase family. Homodimer.

The catalysed reaction is (S)-4-amino-5-oxopentanoate + tRNA(Glu) + NADP(+) = L-glutamyl-tRNA(Glu) + NADPH + H(+). It functions in the pathway porphyrin-containing compound metabolism; protoporphyrin-IX biosynthesis; 5-aminolevulinate from L-glutamyl-tRNA(Glu): step 1/2. It participates in porphyrin-containing compound metabolism; chlorophyll biosynthesis. Catalyzes the NADPH-dependent reduction of glutamyl-tRNA(Glu) to glutamate 1-semialdehyde (GSA). The sequence is that of Glutamyl-tRNA reductase from Prochlorococcus marinus (strain MIT 9303).